Consider the following 533-residue polypeptide: uncharacterized protein (533 aa).

The signal sequence occupies residues 1-21; sequence MVKVWKIGFGVFLPTALLFSA. C22 carries N-palmitoyl cysteine lipidation. Residue C22 is the site of S-diacylglycerol cysteine attachment. Positions 91-111 are disordered; the sequence is LSKNKEGQTASQTRSSSEQTT. Over residues 97–111 the composition is skewed to polar residues; the sequence is GQTASQTRSSSEQTT.

This sequence belongs to the MG067/MG068/MG395 family.

It is found in the cell membrane. This is an uncharacterized protein from Mycoplasma pneumoniae (strain ATCC 29342 / M129 / Subtype 1) (Mycoplasmoides pneumoniae).